A 644-amino-acid polypeptide reads, in one-letter code: Fructose-1,6-bisphosphatase class 3 (644 aa).

The protein belongs to the FBPase class 3 family. Mn(2+) serves as cofactor.

The catalysed reaction is beta-D-fructose 1,6-bisphosphate + H2O = beta-D-fructose 6-phosphate + phosphate. Its pathway is carbohydrate biosynthesis; gluconeogenesis. In Oceanobacillus iheyensis (strain DSM 14371 / CIP 107618 / JCM 11309 / KCTC 3954 / HTE831), this protein is Fructose-1,6-bisphosphatase class 3.